A 115-amino-acid chain; its full sequence is T cell receptor beta variable 11-3 (115 aa).

Residues 1-21 form the signal peptide; that stretch reads MGTRLLCWVAFCLLVEELIEA. The Ig-like domain occupies 22–115; it reads GVVQSPRYKI…SAVYLCASSL (94 aa). C42 and C111 form a disulfide bridge.

As to quaternary structure, alpha-beta TR is a heterodimer composed of an alpha and beta chain; disulfide-linked. The alpha-beta TR is associated with the transmembrane signaling CD3 coreceptor proteins to form the TR-CD3 (TcR or TCR). The assembly of alpha-beta TR heterodimers with CD3 occurs in the endoplasmic reticulum where a single alpha-beta TR heterodimer associates with one CD3D-CD3E heterodimer, one CD3G-CD3E heterodimer and one CD247 homodimer forming a stable octameric structure. CD3D-CD3E and CD3G-CD3E heterodimers preferentially associate with TR alpha and TR beta chains, respectively. The association of the CD247 homodimer is the last step of TcR assembly in the endoplasmic reticulum and is required for transport to the cell surface.

Its subcellular location is the cell membrane. Functionally, v region of the variable domain of T cell receptor (TR) beta chain that participates in the antigen recognition. Alpha-beta T cell receptors are antigen specific receptors which are essential to the immune response and are present on the cell surface of T lymphocytes. Recognize peptide-major histocompatibility (MH) (pMH) complexes that are displayed by antigen presenting cells (APC), a prerequisite for efficient T cell adaptive immunity against pathogens. Binding of alpha-beta TR to pMH complex initiates TR-CD3 clustering on the cell surface and intracellular activation of LCK that phosphorylates the ITAM motifs of CD3G, CD3D, CD3E and CD247 enabling the recruitment of ZAP70. In turn ZAP70 phosphorylates LAT, which recruits numerous signaling molecules to form the LAT signalosome. The LAT signalosome propagates signal branching to three major signaling pathways, the calcium, the mitogen-activated protein kinase (MAPK) kinase and the nuclear factor NF-kappa-B (NF-kB) pathways, leading to the mobilization of transcription factors that are critical for gene expression and essential for T cell growth and differentiation. The T cell repertoire is generated in the thymus, by V-(D)-J rearrangement. This repertoire is then shaped by intrathymic selection events to generate a peripheral T cell pool of self-MH restricted, non-autoaggressive T cells. Post-thymic interaction of alpha-beta TR with the pMH complexes shapes TR structural and functional avidity. This Homo sapiens (Human) protein is T cell receptor beta variable 11-3.